A 349-amino-acid chain; its full sequence is Soluble TNF receptor II (349 aa).

A signal peptide spans 1–19; the sequence is MRSVLYSYILFLSCIIING. TNFR-Cys repeat units follow at residues 31 to 65 and 67 to 108; these read KCKD…NTQC and PCGS…NRIC. Cystine bridges form between cysteine 32-cysteine 43, cysteine 44-cysteine 57, cysteine 47-cysteine 65, cysteine 68-cysteine 83, cysteine 86-cysteine 100, and cysteine 90-cysteine 108. 5 N-linked (GlcNAc...) asparagine; by host glycosylation sites follow: asparagine 101, asparagine 190, asparagine 249, asparagine 277, and asparagine 313.

The protein belongs to the orthopoxvirus OPG002 family.

Its subcellular location is the secreted. Its function is as follows. Inhibits host immune defense by binding to host TNF and various chemokines in the extracellular space. Binds host CC chemokines (beta chemokines) and CXC chemokines (alpha chemokines). This is Soluble TNF receptor II (OPG002) from Monkeypox virus.